A 391-amino-acid polypeptide reads, in one-letter code: Rhizopuspepsin-3 (391 aa).

Positions 1 to 21 are cleaved as a signal peptide; that stretch reads MKFTLISSCVTLALMTLSIEA. Positions 22-68 are cleaved as a propeptide — activation peptide; sequence APSGKKVNIPLTKNKDYKPNAKNAIQKAIAKYHRHRSVSSSNSTSTD. The region spanning 84–388 is the Peptidase A1 domain; that stretch reads YYGEVTVGTP…NPEVPHVQIA (305 aa). D102 is an active-site residue. A disulfide bridge links C115 with C118. D285 is an active-site residue. Cysteines 319 and 352 form a disulfide.

Belongs to the peptidase A1 family.

The enzyme catalyses Hydrolysis of proteins with broad specificity similar to that of pepsin A, preferring hydrophobic residues at P1 and P1'. Clots milk and activates trypsinogen. Does not cleave 4-Gln-|-His-5, but does cleave 10-His-|-Leu-11 and 12-Val-|-Glu-13 in B chain of insulin.. In Rhizopus niveus, this protein is Rhizopuspepsin-3.